We begin with the raw amino-acid sequence, 232 residues long: Ubiquinone biosynthesis O-methyltransferase (232 aa).

Positions 36, 55, 76, and 120 each coordinate S-adenosyl-L-methionine.

This sequence belongs to the methyltransferase superfamily. UbiG/COQ3 family.

It carries out the reaction a 3-demethylubiquinol + S-adenosyl-L-methionine = a ubiquinol + S-adenosyl-L-homocysteine + H(+). The catalysed reaction is a 3-(all-trans-polyprenyl)benzene-1,2-diol + S-adenosyl-L-methionine = a 2-methoxy-6-(all-trans-polyprenyl)phenol + S-adenosyl-L-homocysteine + H(+). It participates in cofactor biosynthesis; ubiquinone biosynthesis. Its function is as follows. O-methyltransferase that catalyzes the 2 O-methylation steps in the ubiquinone biosynthetic pathway. The chain is Ubiquinone biosynthesis O-methyltransferase from Burkholderia cenocepacia (strain ATCC BAA-245 / DSM 16553 / LMG 16656 / NCTC 13227 / J2315 / CF5610) (Burkholderia cepacia (strain J2315)).